The following is an 891-amino-acid chain: Translation initiation factor IF-2 (891 aa).

Residues 50–303 form a disordered region; it reads KKEHGSADES…TSMQHGFDKS (254 aa). Composition is skewed to basic and acidic residues over residues 102–237 and 245–261; these read TLEE…KTAD and HARE…EQQP. Residues 390 to 559 enclose the tr-type G domain; it reads GRAPVVTIMG…LLQSEVLELT (170 aa). The interval 399 to 406 is G1; that stretch reads GHVDHGKT. 399–406 lines the GTP pocket; it reads GHVDHGKT. The tract at residues 424-428 is G2; sequence GITQH. A G3 region spans residues 445 to 448; the sequence is DTPG. GTP is bound by residues 445 to 449 and 499 to 502; these read DTPGH and NKID. The G4 stretch occupies residues 499–502; it reads NKID. The interval 535–537 is G5; sequence SAK.

It belongs to the TRAFAC class translation factor GTPase superfamily. Classic translation factor GTPase family. IF-2 subfamily.

It localises to the cytoplasm. Its function is as follows. One of the essential components for the initiation of protein synthesis. Protects formylmethionyl-tRNA from spontaneous hydrolysis and promotes its binding to the 30S ribosomal subunits. Also involved in the hydrolysis of GTP during the formation of the 70S ribosomal complex. This chain is Translation initiation factor IF-2, found in Aliivibrio salmonicida (strain LFI1238) (Vibrio salmonicida (strain LFI1238)).